The sequence spans 254 residues: Phosphoglycerate mutase 1 (254 aa).

Substrate-binding positions include Arg-10 to Asn-17 and Ser-23 to Gly-24. Residue His-11 is the Tele-phosphohistidine intermediate of the active site. 2 positions are modified to phosphoserine: Ser-14 and Ser-23. Tyr-26 is subject to Phosphotyrosine. A Phosphoserine modification is found at Ser-31. Residues Arg-62, Glu-89 to Tyr-92, and Lys-100 each bind substrate. Glu-89 serves as the catalytic Proton donor/acceptor. At Lys-106 the chain carries N6-acetyllysine. A substrate-binding site is contributed by Arg-116–Arg-117. A Phosphoserine modification is found at Ser-118. Gly-187 to Asn-188 lines the substrate pocket. Lys-251 carries the post-translational modification N6-acetyllysine; alternate. Lys-251 carries the post-translational modification N6-succinyllysine; alternate. N6-acetyllysine is present on residues Lys-253 and Lys-254.

It belongs to the phosphoglycerate mutase family. BPG-dependent PGAM subfamily. As to quaternary structure, homodimer. Post-translationally, acetylated at Lys-253, Lys-253 and Lys-254 under high glucose condition. Acetylation increases catalytic activity. Under glucose restriction SIRT1 levels dramatically increase and it deacetylates the enzyme.

The enzyme catalyses (2R)-2-phosphoglycerate = (2R)-3-phosphoglycerate. The catalysed reaction is (2R)-3-phospho-glyceroyl phosphate = (2R)-2,3-bisphosphoglycerate + H(+). Its function is as follows. Catalyzes the interconversion of 2-phosphoglycerate and 3-phosphoglyceratea crucial step in glycolysis, by using 2,3-bisphosphoglycerate. Also catalyzes the interconversion of (2R)-2,3-bisphosphoglycerate and (2R)-3-phospho-glyceroyl phosphate. In Pongo abelii (Sumatran orangutan), this protein is Phosphoglycerate mutase 1.